The chain runs to 395 residues: S-adenosylmethionine synthase (395 aa).

ATP is bound at residue histidine 16. Aspartate 18 contributes to the Mg(2+) binding site. Residue glutamate 44 participates in K(+) binding. L-methionine contacts are provided by glutamate 57 and glutamine 100. Residues glutamine 100–arginine 110 are flexible loop. ATP-binding positions include aspartate 167–lysine 169, arginine 233–phenylalanine 234, aspartate 242, arginine 248–lysine 249, alanine 265, and lysine 269. Aspartate 242 contributes to the L-methionine binding site. Position 273 (lysine 273) interacts with L-methionine.

Belongs to the AdoMet synthase family. As to quaternary structure, homotetramer; dimer of dimers. Mg(2+) serves as cofactor. K(+) is required as a cofactor.

The protein resides in the cytoplasm. It carries out the reaction L-methionine + ATP + H2O = S-adenosyl-L-methionine + phosphate + diphosphate. The protein operates within amino-acid biosynthesis; S-adenosyl-L-methionine biosynthesis; S-adenosyl-L-methionine from L-methionine: step 1/1. Its function is as follows. Catalyzes the formation of S-adenosylmethionine (AdoMet) from methionine and ATP. The overall synthetic reaction is composed of two sequential steps, AdoMet formation and the subsequent tripolyphosphate hydrolysis which occurs prior to release of AdoMet from the enzyme. The protein is S-adenosylmethionine synthase of Burkholderia lata (strain ATCC 17760 / DSM 23089 / LMG 22485 / NCIMB 9086 / R18194 / 383).